The following is a 458-amino-acid chain: Retinoic acid receptor alpha (458 aa).

Positions 1–87 (MSSKDNTCPP…PPPLPRIYKP (87 aa)) are modulating. Residues 39–78 (GGLPGVQHQPPLSGYSTPSPATIETQSTSSEEIVPSPPTP) are disordered. Residues 52–69 (GYSTPSPATIETQSTSSE) show a composition bias toward polar residues. NR C4-type zinc fingers lie at residues 88 to 108 (CFVCQDKSSGYHYGVSACEGC) and 124 to 148 (CHRDKNCIINKVTRNRCQYCRLQKC). A DNA-binding region (nuclear receptor) is located at residues 88–153 (CFVCQDKSSG…RLQKCFEVGM (66 aa)). The hinge stretch occupies residues 154–182 (SKESVRNDRNKKKKESPKPEAIESYILSP). One can recognise an NR LBD domain in the interval 183 to 417 (ETQDLIEKVQ…LIQEMLENSE (235 aa)). The 9aaTAD signature appears at 407 to 415 (PLIQEMLEN). Residues 419–458 (LDTLGGGASSDAPVTPVAPGSCSPSLSPSSTHSSPSTHSP) are disordered. Low complexity predominate over residues 439-458 (SCSPSLSPSSTHSSPSTHSP).

This sequence belongs to the nuclear hormone receptor family. NR1 subfamily. In terms of assembly, heterodimer; with an rxr molecule. Binds DNA preferentially as a rar/rxr heterodimer.

It localises to the nucleus. Functionally, receptor for retinoic acid. Retinoic acid receptors bind as heterodimers to their target response elements in response to their ligands, all-trans or 9-cis retinoic acid, and regulate gene expression in various biological processes. The rar/rxr heterodimers bind to the retinoic acid response elements (RARE) composed of tandem 5'-AGGTCA-3' sites known as DR1-DR5. Required for primary neurogenesis and for anteroposterior neural patterning. This is Retinoic acid receptor alpha (rara) from Xenopus laevis (African clawed frog).